Reading from the N-terminus, the 135-residue chain is RxLR effector protein Avh5 (135 aa).

The signal sequence occupies residues 1 to 19 (MRLQFFLVMAVATLATISA). The RxLR-dEER motif lies at 43–71 (RFLRTADTDIVYEPKVHNPGKKQVFIEDK). Residues K81, K83, and K84 each coordinate a 1,2-diacyl-sn-glycero-3-phospho-(1D-myo-inositol-3-phosphate).

Belongs to the RxLR effector family.

It is found in the secreted. It localises to the host cell. In terms of biological role, effector that suppresses plant defense responses during the early stages of pathogen infection. Suppresses cell death induced by effectors and PAMPs in plant hosts. In Phytophthora sojae (Soybean stem and root rot agent), this protein is RxLR effector protein Avh5.